Here is a 348-residue protein sequence, read N- to C-terminus: Histidinol-phosphate aminotransferase (348 aa).

K210 carries the N6-(pyridoxal phosphate)lysine modification.

The protein belongs to the class-II pyridoxal-phosphate-dependent aminotransferase family. Histidinol-phosphate aminotransferase subfamily. As to quaternary structure, homodimer. The cofactor is pyridoxal 5'-phosphate.

The catalysed reaction is L-histidinol phosphate + 2-oxoglutarate = 3-(imidazol-4-yl)-2-oxopropyl phosphate + L-glutamate. It functions in the pathway amino-acid biosynthesis; L-histidine biosynthesis; L-histidine from 5-phospho-alpha-D-ribose 1-diphosphate: step 7/9. This chain is Histidinol-phosphate aminotransferase, found in Pseudomonas putida (strain ATCC 700007 / DSM 6899 / JCM 31910 / BCRC 17059 / LMG 24140 / F1).